A 168-amino-acid polypeptide reads, in one-letter code: Lipoprotein signal peptidase (168 aa).

3 consecutive transmembrane segments (helical) span residues Val6–Thr26, Trp70–Leu90, and Ala98–Leu118. Residues Asp123 and Asp141 contribute to the active site. Residues Ile139–Thr159 form a helical membrane-spanning segment.

The protein belongs to the peptidase A8 family.

Its subcellular location is the cell inner membrane. It catalyses the reaction Release of signal peptides from bacterial membrane prolipoproteins. Hydrolyzes -Xaa-Yaa-Zaa-|-(S,diacylglyceryl)Cys-, in which Xaa is hydrophobic (preferably Leu), and Yaa (Ala or Ser) and Zaa (Gly or Ala) have small, neutral side chains.. It participates in protein modification; lipoprotein biosynthesis (signal peptide cleavage). Functionally, this protein specifically catalyzes the removal of signal peptides from prolipoproteins. The polypeptide is Lipoprotein signal peptidase (Teredinibacter turnerae (strain ATCC 39867 / T7901)).